The following is a 201-amino-acid chain: Urease accessory protein UreG (201 aa).

Position 11–18 (11–18 (GPVGSGKT)) interacts with GTP.

The protein belongs to the SIMIBI class G3E GTPase family. UreG subfamily. Homodimer. UreD, UreF and UreG form a complex that acts as a GTP-hydrolysis-dependent molecular chaperone, activating the urease apoprotein by helping to assemble the nickel containing metallocenter of UreC. The UreE protein probably delivers the nickel.

The protein resides in the cytoplasm. Its function is as follows. Facilitates the functional incorporation of the urease nickel metallocenter. This process requires GTP hydrolysis, probably effectuated by UreG. This chain is Urease accessory protein UreG, found in Prochlorococcus marinus subsp. pastoris (strain CCMP1986 / NIES-2087 / MED4).